Here is a 372-residue protein sequence, read N- to C-terminus: Probable arabinan endo-1,5-alpha-L-arabinosidase B (372 aa).

A signal peptide spans 1–16; it reads MTVLVALFCLVTWTLC. Residues 23–34 show a composition bias toward low complexity; that stretch reads STQGTQQPQQPE. A disordered region spans residues 23 to 52; that stretch reads STQGTQQPQQPEKTPHPHPQPEDAFPPTHA. Residue Asp-59 is the Proton acceptor of the active site. Residue Asn-120 is glycosylated (N-linked (GlcNAc...) asparagine). Glu-252 (proton donor) is an active-site residue. A glycan (N-linked (GlcNAc...) asparagine) is linked at Asn-363.

The protein belongs to the glycosyl hydrolase 43 family.

It is found in the secreted. It carries out the reaction Endohydrolysis of (1-&gt;5)-alpha-arabinofuranosidic linkages in (1-&gt;5)-arabinans.. It participates in glycan metabolism; L-arabinan degradation. Endo-1,5-alpha-L-arabinanase involved in degradation of pectin. Its preferred substrate is linear 1,5-alpha-L-arabinan. This Aspergillus fumigatus (strain ATCC MYA-4609 / CBS 101355 / FGSC A1100 / Af293) (Neosartorya fumigata) protein is Probable arabinan endo-1,5-alpha-L-arabinosidase B (abnB).